Consider the following 134-residue polypeptide: MKSVFTISASLAISLMLCCTAQANDHKILGVIAMPRNETNDLALKLPVCRIVKRIQLSADHGDLQLSGASVYFKAARSASQSLNIPSEIKEGQTTDWININSDNDNKRCVSKITFSGHTVNSSDMATLKIIGDD.

The N-terminal stretch at 1–23 (MKSVFTISASLAISLMLCCTAQA) is a signal peptide.

It belongs to the UPF0412 family.

The sequence is that of UPF0412 protein YaaI from Escherichia coli (strain ATCC 8739 / DSM 1576 / NBRC 3972 / NCIMB 8545 / WDCM 00012 / Crooks).